Here is a 276-residue protein sequence, read N- to C-terminus: Large ribosomal subunit protein uL2 (276 aa).

Residues 224-276 are disordered; the sequence is AMNPVDHPLGGGEGKSSGGRHPVTPWGKPTKGYKTRNKKKPSSKLIVKRRGQK. The segment covering 254 to 276 has biased composition (basic residues); sequence KGYKTRNKKKPSSKLIVKRRGQK.

Belongs to the universal ribosomal protein uL2 family. In terms of assembly, part of the 50S ribosomal subunit. Forms a bridge to the 30S subunit in the 70S ribosome.

Its function is as follows. One of the primary rRNA binding proteins. Required for association of the 30S and 50S subunits to form the 70S ribosome, for tRNA binding and peptide bond formation. It has been suggested to have peptidyltransferase activity; this is somewhat controversial. Makes several contacts with the 16S rRNA in the 70S ribosome. This is Large ribosomal subunit protein uL2 from Solidesulfovibrio magneticus (strain ATCC 700980 / DSM 13731 / RS-1) (Desulfovibrio magneticus).